Here is a 728-residue protein sequence, read N- to C-terminus: Probable LRR receptor-like serine/threonine-protein kinase At1g14390 (728 aa).

A signal peptide spans Met1–Ser27. The Extracellular portion of the chain corresponds to Gln28–Leu356. N-linked (GlcNAc...) asparagine glycans are attached at residues Asn55 and Asn85. LRR repeat units follow at residues Asn74–Ser96, Leu106–Leu130, Ser131–Leu155, Asn157–Leu178, Ser179–Asn202, Ile204–Leu224, Asn225–Leu248, Pro249–Asn272, and Lys274–Ser295. Residues Asn138 and Asn169 are each glycosylated (N-linked (GlcNAc...) asparagine). The N-linked (GlcNAc...) asparagine glycan is linked to Asn210. Asn253 and Asn267 each carry an N-linked (GlcNAc...) asparagine glycan. The chain crosses the membrane as a helical span at residues Val357 to Val377. The Cytoplasmic segment spans residues Arg378 to Leu728. The region spanning Thr421–Ile709 is the Protein kinase domain.

The protein belongs to the protein kinase superfamily. Ser/Thr protein kinase family.

Its subcellular location is the membrane. It catalyses the reaction L-seryl-[protein] + ATP = O-phospho-L-seryl-[protein] + ADP + H(+). The catalysed reaction is L-threonyl-[protein] + ATP = O-phospho-L-threonyl-[protein] + ADP + H(+). This chain is Probable LRR receptor-like serine/threonine-protein kinase At1g14390, found in Arabidopsis thaliana (Mouse-ear cress).